Reading from the N-terminus, the 245-residue chain is Lactate utilization protein A (245 aa).

The protein belongs to the LutA/YkgE family.

Is involved in L-lactate degradation and allows cells to grow with lactate as the sole carbon source. This chain is Lactate utilization protein A, found in Exiguobacterium sp. (strain ATCC BAA-1283 / AT1b).